The following is a 458-amino-acid chain: UDP-N-acetylmuramate--L-alanine ligase (458 aa).

119-125 (GTHGKTT) is a binding site for ATP.

It belongs to the MurCDEF family.

It is found in the cytoplasm. The enzyme catalyses UDP-N-acetyl-alpha-D-muramate + L-alanine + ATP = UDP-N-acetyl-alpha-D-muramoyl-L-alanine + ADP + phosphate + H(+). It participates in cell wall biogenesis; peptidoglycan biosynthesis. In terms of biological role, cell wall formation. The sequence is that of UDP-N-acetylmuramate--L-alanine ligase from Phocaeicola vulgatus (strain ATCC 8482 / DSM 1447 / JCM 5826 / CCUG 4940 / NBRC 14291 / NCTC 11154) (Bacteroides vulgatus).